The primary structure comprises 528 residues: Putative ABC transporter ATP-binding protein MA_1418 (528 aa).

ABC transporter domains are found at residues 2-242 (IELR…TNLT) and 262-494 (ISVK…SDYK). ATP contacts are provided by residues 36 to 43 (GHSAAGKT) and 294 to 301 (GENGSGKT).

It belongs to the ABC transporter superfamily.

It is found in the cell membrane. Probably part of an ABC transporter complex. Responsible for energy coupling to the transport system. The chain is Putative ABC transporter ATP-binding protein MA_1418 from Methanosarcina acetivorans (strain ATCC 35395 / DSM 2834 / JCM 12185 / C2A).